Consider the following 405-residue polypeptide: Cytoplasmic tRNA 2-thiolation protein 2 (405 aa).

Belongs to the CTU2/NCS2 family.

The protein localises to the cytoplasm. It functions in the pathway tRNA modification; 5-methoxycarbonylmethyl-2-thiouridine-tRNA biosynthesis. Functionally, plays a central role in 2-thiolation of mcm(5)S(2)U at tRNA wobble positions of tRNA(Lys), tRNA(Glu) and tRNA(Gln). May act by forming a heterodimer with NCS6/CTU1 that ligates sulfur from thiocarboxylated URM1 onto the uridine of tRNAs at wobble position. This Drosophila melanogaster (Fruit fly) protein is Cytoplasmic tRNA 2-thiolation protein 2.